The chain runs to 407 residues: Putative nickel insertion protein (407 aa).

This sequence belongs to the LarC family.

In Gloeothece citriformis (strain PCC 7424) (Cyanothece sp. (strain PCC 7424)), this protein is Putative nickel insertion protein.